A 485-amino-acid polypeptide reads, in one-letter code: Trk system potassium uptake protein TrkH (485 aa).

At 1-2 (MQ) the chain is on the cytoplasmic side. A helical membrane pass occupies residues 3–29 (FRSIIRIVGLLLALFSVTMLAPALVAL). The Periplasmic segment spans residues 30–35 (LYRDGA). Residues 36-57 (GVPFVTTFFVLLFCGAMCWFPN) traverse the membrane as a helical segment. The Cytoplasmic segment spans residues 58-65 (RRHKHELK). Residues 66–90 (SRDGFLIVVLFWTVLGSAGSLPFLI) form a helical membrane-spanning segment. The helical; Pore-forming intramembrane region spans 98–109 (VTDAFFESFSAL). Residues 110–115 (TTTGAT) lie within the membrane without spanning it. The segment at 110–115 (TTTGAT) is selectivity filter part 1. The K(+) site is built by Thr-111 and Thr-112. At 116–124 (VIVGLDELP) the chain is on the periplasmic side. The chain crosses the membrane as a helical span at residues 125–150 (KAILFYRQFLQWFGGMGIIVLAVAIL). Topologically, residues 151-177 (PVLGIGGMQLYRAEIPGPVKDTKMTPR) are cytoplasmic. The chain crosses the membrane as a helical span at residues 178-202 (IAETAKALWYIYLSLTIACAVAFWL). Topologically, residues 203–205 (AGM) are periplasmic. An intramembrane region is located at residue Thr-206. An intramembrane region (helical; Pore-forming) is located at residues 207–218 (PFDAISHSFSTI). Residues 219 to 224 (AIGGFS) lie within the membrane without spanning it. The selectivity filter part 2 stretch occupies residues 219–224 (AIGGFS). K(+) is bound by residues Ile-220 and Gly-221. Topologically, residues 225-234 (THDASMGYFD) are periplasmic. The segment at residues 235-250 (SYAINLITVVFLLISA) is an intramembrane region (helical). A helical membrane pass occupies residues 276–296 (FRAFIFIQVLLFLVCFLLLLK). An intramembrane region (helical; Pore-forming) is located at residues 303–318 (PYDAFDQALFQTVSIS). The stretch at 319-324 (TTAGFT) is an intramembrane region. A selectivity filter part 3 region spans residues 319-324 (TTAGFT). K(+) is bound by residues Thr-320 and Ala-321. At 325 to 332 (TTGFADWP) the chain is on the periplasmic side. Residues 333–344 (LFLPVLLLFSSF) constitute an intramembrane region (helical). An intramembrane region (note=Loop between two helices) is located at residues 345 to 357 (IGGCAGSTGGGMK). The helical transmembrane segment at 392 to 419 (PQRVVDAVWGFFSAYALVFVVCMLGLIA) threads the bilayer. The Periplasmic segment spans residues 420–421 (TG). The stretch at 422 to 423 (MD) is an intramembrane region. The helical; Pore-forming intramembrane region spans 424–434 (ELSAFSAVAAT). Residues 435–441 (LNNLGPG) lie within the membrane without spanning it. A selectivity filter part 4 region spans residues 436 to 441 (NNLGPG). K(+) contacts are provided by Asn-437 and Leu-438. The Periplasmic portion of the chain corresponds to 442 to 453 (LGEVALHFGDVN). Positions 454–465 (DKAKWVLIVSML) form an intramembrane region, helical.

This sequence belongs to the TrkH potassium transport family. In terms of assembly, homodimer.

Its subcellular location is the cell inner membrane. Its function is as follows. Low-affinity potassium transport system. Interacts with trk system potassium uptake protein TrkA and requires TrkE for transport activity. Selective for permeation of potassium ion and rubidium ion over smaller ions such as natrium or litium. The sequence is that of Trk system potassium uptake protein TrkH from Vibrio parahaemolyticus serotype O3:K6 (strain RIMD 2210633).